The primary structure comprises 146 residues: VHLTGEEKAAVTGLWGKVNVEEVGGEALGRLLVVYPWTQRFFDSFGDLSSPSAVMGNPKVKAHGKKVLNSFSDGLKNLDNLKGTFAKLSELHCDKLHVDPENFRLLGNVLVCVLARHFGKEFTPQVQAAYQKVVAGVATALAHKYH.

V1 carries the N-acetylvaline modification. The Globin domain maps to 2–146 (HLTGEEKAAV…VATALAHKYH (145 aa)). T12 bears the Phosphothreonine mark. Position 44 is a phosphoserine (S44). K59 is subject to N6-acetyllysine. Residue H63 coordinates heme b. The residue at position 82 (K82) is an N6-acetyllysine. A heme b-binding site is contributed by H92. C93 bears the S-nitrosocysteine mark. K144 carries the post-translational modification N6-acetyllysine.

The protein belongs to the globin family. As to quaternary structure, heterotetramer of two alpha chains and two beta chains. In terms of tissue distribution, red blood cells.

In terms of biological role, involved in oxygen transport from the lung to the various peripheral tissues. The polypeptide is Hemoglobin subunit beta (HBB) (Macroderma gigas (Australian ghost bat)).